Consider the following 228-residue polypeptide: Deoxyribose-phosphate aldolase (228 aa).

Aspartate 96 (proton donor/acceptor) is an active-site residue. Lysine 157 acts as the Schiff-base intermediate with acetaldehyde in catalysis. Catalysis depends on lysine 185, which acts as the Proton donor/acceptor.

This sequence belongs to the DeoC/FbaB aldolase family. DeoC type 1 subfamily.

The protein localises to the cytoplasm. The catalysed reaction is 2-deoxy-D-ribose 5-phosphate = D-glyceraldehyde 3-phosphate + acetaldehyde. It participates in carbohydrate degradation; 2-deoxy-D-ribose 1-phosphate degradation; D-glyceraldehyde 3-phosphate and acetaldehyde from 2-deoxy-alpha-D-ribose 1-phosphate: step 2/2. In terms of biological role, catalyzes a reversible aldol reaction between acetaldehyde and D-glyceraldehyde 3-phosphate to generate 2-deoxy-D-ribose 5-phosphate. This Cyanothece sp. (strain PCC 7425 / ATCC 29141) protein is Deoxyribose-phosphate aldolase.